We begin with the raw amino-acid sequence, 149 residues long: Transcriptional repressor NrdR (149 aa).

A zinc finger spans residues 3-34 (CPFCFAVDTKVIDSRLVGEGSSVRRRRQCLVC). One can recognise an ATP-cone domain in the interval 49–139 (PRVVKSNDVR…VYRSFEDIRE (91 aa)).

It belongs to the NrdR family. The cofactor is Zn(2+).

Negatively regulates transcription of bacterial ribonucleotide reductase nrd genes and operons by binding to NrdR-boxes. The chain is Transcriptional repressor NrdR from Cronobacter sakazakii (strain ATCC BAA-894) (Enterobacter sakazakii).